Reading from the N-terminus, the 367-residue chain is Probable peptidoglycan glycosyltransferase FtsW (367 aa).

9 consecutive transmembrane segments (helical) span residues 32 to 52, 57 to 77, 87 to 107, 119 to 139, 149 to 169, 171 to 191, 251 to 271, 296 to 316, and 323 to 343; these read LIFI…PMKF, AFWG…PGIG, IPIG…MIVF, IHGL…CFLL, MVVV…FALF, LLFL…PWRM, VVGE…FVLL, GVVV…FGVF, and LPFI…FGLL.

The protein belongs to the SEDS family. FtsW subfamily.

Its subcellular location is the cell inner membrane. It carries out the reaction [GlcNAc-(1-&gt;4)-Mur2Ac(oyl-L-Ala-gamma-D-Glu-L-Lys-D-Ala-D-Ala)](n)-di-trans,octa-cis-undecaprenyl diphosphate + beta-D-GlcNAc-(1-&gt;4)-Mur2Ac(oyl-L-Ala-gamma-D-Glu-L-Lys-D-Ala-D-Ala)-di-trans,octa-cis-undecaprenyl diphosphate = [GlcNAc-(1-&gt;4)-Mur2Ac(oyl-L-Ala-gamma-D-Glu-L-Lys-D-Ala-D-Ala)](n+1)-di-trans,octa-cis-undecaprenyl diphosphate + di-trans,octa-cis-undecaprenyl diphosphate + H(+). Its pathway is cell wall biogenesis; peptidoglycan biosynthesis. In terms of biological role, peptidoglycan polymerase that is essential for cell division. The polypeptide is Probable peptidoglycan glycosyltransferase FtsW (Taylorella equigenitalis (strain MCE9)).